Here is a 265-residue protein sequence, read N- to C-terminus: Phosphatidylglycerol--prolipoprotein diacylglyceryl transferase (265 aa).

Transmembrane regions (helical) follow at residues 17 to 37 (VAVR…VVLG), 57 to 77 (LLLY…VLFY), 89 to 109 (ILAV…VLVA), 127 to 147 (FIAP…FING), 176 to 196 (QLYQ…VFAA), 201 to 218 (LRAV…LRFV), and 233 to 253 (LVPG…VGLA). Residue Arg140 participates in a 1,2-diacyl-sn-glycero-3-phospho-(1'-sn-glycerol) binding.

Belongs to the Lgt family.

It is found in the cell inner membrane. It catalyses the reaction L-cysteinyl-[prolipoprotein] + a 1,2-diacyl-sn-glycero-3-phospho-(1'-sn-glycerol) = an S-1,2-diacyl-sn-glyceryl-L-cysteinyl-[prolipoprotein] + sn-glycerol 1-phosphate + H(+). It functions in the pathway protein modification; lipoprotein biosynthesis (diacylglyceryl transfer). Its function is as follows. Catalyzes the transfer of the diacylglyceryl group from phosphatidylglycerol to the sulfhydryl group of the N-terminal cysteine of a prolipoprotein, the first step in the formation of mature lipoproteins. This is Phosphatidylglycerol--prolipoprotein diacylglyceryl transferase from Azoarcus sp. (strain BH72).